Reading from the N-terminus, the 152-residue chain is Adenosine 5'-monophosphoramidase HNT1 (152 aa).

The 112-residue stretch at 8–119 folds into the HIT domain; the sequence is IFCKIIKGEI…IPKKDEATGL (112 aa). Residues 33 to 34, Asn-93, 99 to 101, and 106 to 108 contribute to the AMP site; these read DI, HQV, and HFH. A Histidine triad motif motif is present at residues 104 to 108; the sequence is HVHFH. His-106 (tele-AMP-histidine intermediate) is an active-site residue.

This sequence belongs to the HINT family. Homodimer. The cofactor is Mg(2+).

The enzyme catalyses adenosine 5'-phosphoramidate + H2O = AMP + NH4(+). Hydrolyzes adenosine 5'-monophosphoramidate substrates such as AMP-morpholidate, AMP-N-alanine methyl ester, AMP-alpha-acetyl lysine methyl ester and AMP-NH2. This is Adenosine 5'-monophosphoramidase HNT1 from Candida albicans (strain SC5314 / ATCC MYA-2876) (Yeast).